A 1709-amino-acid polypeptide reads, in one-letter code: Sialoadhesin (1709 aa).

Positions 1–19 are cleaved as a signal peptide; sequence MGFLPKLLLLASFFPAGQA. In terms of domain architecture, Ig-like V-type spans 20 to 136; that stretch reads SWGVSSPQDV…DVKGTLVTVT (117 aa). Over 20–1641 the chain is Extracellular; the sequence is SWGVSSPQDV…ALHRLHQFQQ (1622 aa). Disulfide bonds link Cys36–Cys166, Cys41–Cys98, Cys160–Cys217, and Cys262–Cys305. N-acetylneuraminate-binding positions include Tyr63, Arg116, and 122 to 126; that span reads VNRWS. Ig-like C2-type domains lie at 139 to 233, 238 to 320, 326 to 405, 411 to 507, 511 to 593, 601 to 705, 708 to 785, 799 to 894, 898 to 977, 984 to 1083, 1085 to 1165, and 1176 to 1248; these read PRVP…IHLQ, PKGV…PPIS, AEVQ…GPVS, PPLT…LDFH, ARLL…AVLT, PTFT…ATFN, ATVL…AQLS, PKLS…FQVR, VQVS…APIS, PRHV…ADFD, QAVN…RPIT, and RLTY…SPLG. Residue Asn159 is glycosylated (N-linked (GlcNAc...) asparagine). N-linked (GlcNAc...) asparagine glycosylation is found at Asn265 and Asn339. Cystine bridges form between Cys346/Cys390 and Cys433/Cys491. Asn499 carries N-linked (GlcNAc...) asparagine glycosylation. 2 cysteine pairs are disulfide-bonded: Cys531-Cys575 and Cys624-Cys689. Residues Asn697, Asn726, Asn730, and Asn741 are each glycosylated (N-linked (GlcNAc...) asparagine). Disulfide bonds link Cys729-Cys774 and Cys817-Cys876. An N-linked (GlcNAc...) asparagine glycan is attached at Asn886. 2 cysteine pairs are disulfide-bonded: Cys916–Cys960 and Cys1005–Cys1067. Residues Asn1104 and Asn1138 are each glycosylated (N-linked (GlcNAc...) asparagine). Intrachain disulfides connect Cys1107–Cys1149 and Cys1193–Cys1241. N-linked (GlcNAc...) asparagine glycosylation is present at Asn1251. 4 Ig-like C2-type domains span residues 1259-1341, 1350-1442, 1445-1528, and 1536-1631; these read EGVR…AALQ, VLSS…RLQV, ARVV…VMLR, and PTMM…FGVR. Disulfide bonds link Cys1281–Cys1324 and Cys1367–Cys1425. N-linked (GlcNAc...) asparagine glycans are attached at residues Asn1462 and Asn1476. Disulfide bonds link Cys1465-Cys1511 and Cys1554-Cys1613. The chain crosses the membrane as a helical span at residues 1642–1662; it reads LLWVLGLLVGLLLLLLGLGAC. Residues 1663 to 1709 are Cytoplasmic-facing; sequence YTWRRRRVCKQSMGENSVEMAFQKETTQLIDPDAATCETSTCAPPLG.

Belongs to the immunoglobulin superfamily. SIGLEC (sialic acid binding Ig-like lectin) family. As to quaternary structure, interacts with TYROBP. Interacts with CLEC10A. In terms of tissue distribution, expressed by macrophages in various tissues. High levels are found in spleen, lymph node, perivascular macrophages in brain and lower levels in bone marrow, liver Kupffer cells and lamina propria of colon and lung. Also expressed by inflammatory macrophages in rheumatoid arthritis.

The protein localises to the cell membrane. It is found in the secreted. In terms of biological role, macrophage-restricted adhesion molecule that mediates sialic-acid dependent binding to lymphocytes, including granulocytes, monocytes, natural killer cells, B-cells and CD8 T-cells. Plays a crucial role in limiting bacterial dissemination by engaging sialylated bacteria to promote effective phagocytosis and antigen presentation for the adaptive immune response. Mediates the uptake of various enveloped viruses via sialic acid recognition and subsequently induces the formation of intracellular compartments filled with virions (VCCs). In turn, enhances macrophage-to-T-cell transmission of several viruses including HIV-1 or SARS-CoV-2. Acts as an endocytic receptor mediating clathrin dependent endocytosis. Preferentially binds to alpha-2,3-linked sialic acid. Binds to SPN/CD43 on T-cells. May play a role in hemopoiesis. Plays a role in the inhibition of antiviral innate immune by promoting TBK1 degradation via TYROBP and TRIM27-mediated ubiquitination. Its function is as follows. (Microbial infection) Facilitates viral cytoplasmic entry into activated dendritic cells via recognition of sialylated gangliosides pesent on viral membrane. The sequence is that of Sialoadhesin (SIGLEC1) from Homo sapiens (Human).